The following is a 690-amino-acid chain: Polyphosphate kinase (690 aa).

Residue Asn-45 participates in ATP binding. Residues Arg-375 and Arg-405 each contribute to the Mg(2+) site. His-435 acts as the Phosphohistidine intermediate in catalysis. Residues Tyr-468, Arg-564, and His-592 each coordinate ATP.

Belongs to the polyphosphate kinase 1 (PPK1) family. Mg(2+) serves as cofactor. An intermediate of this reaction is the autophosphorylated ppk in which a phosphate is covalently linked to a histidine residue through a N-P bond.

It catalyses the reaction [phosphate](n) + ATP = [phosphate](n+1) + ADP. Its function is as follows. Catalyzes the reversible transfer of the terminal phosphate of ATP to form a long-chain polyphosphate (polyP). This chain is Polyphosphate kinase, found in Pseudomonas aeruginosa (strain ATCC 15692 / DSM 22644 / CIP 104116 / JCM 14847 / LMG 12228 / 1C / PRS 101 / PAO1).